The primary structure comprises 386 residues: DNA-directed RNA polymerase subunit Rpo1C (386 aa).

This sequence belongs to the RNA polymerase beta' chain family. In terms of assembly, part of the RNA polymerase complex.

The protein resides in the cytoplasm. It catalyses the reaction RNA(n) + a ribonucleoside 5'-triphosphate = RNA(n+1) + diphosphate. DNA-dependent RNA polymerase (RNAP) catalyzes the transcription of DNA into RNA using the four ribonucleoside triphosphates as substrates. Forms part of the jaw domain. This chain is DNA-directed RNA polymerase subunit Rpo1C, found in Methanococcus maripaludis (strain C5 / ATCC BAA-1333).